A 1158-amino-acid chain; its full sequence is ATP-dependent helicase/deoxyribonuclease subunit B (1158 aa).

8-15 lines the ATP pocket; the sequence is GRAGTGKS. Residues Cys791, Cys1112, Cys1115, and Cys1121 each coordinate [4Fe-4S] cluster.

The protein belongs to the helicase family. AddB/RexB type 1 subfamily. As to quaternary structure, heterodimer of AddA and AddB. The cofactor is Mg(2+). It depends on [4Fe-4S] cluster as a cofactor.

Its function is as follows. The heterodimer acts as both an ATP-dependent DNA helicase and an ATP-dependent, dual-direction single-stranded exonuclease. Recognizes the chi site generating a DNA molecule suitable for the initiation of homologous recombination. The AddB subunit has 5' -&gt; 3' nuclease activity but not helicase activity. The chain is ATP-dependent helicase/deoxyribonuclease subunit B from Clostridium perfringens (strain SM101 / Type A).